A 273-amino-acid polypeptide reads, in one-letter code: Cbp/p300-interacting transactivator 2 (273 aa).

Positions 137-204 are disordered; the sequence is DLHPAAGHQM…GSGGSGSSNM (68 aa). Over residues 165-200 the composition is skewed to gly residues; the sequence is STPGGSGGSSTPGGSGGSAGGGAGSSNSGGGSGGSG.

The protein belongs to the CITED family. In terms of assembly, interacts (via C-terminus) with SMAD2. Interacts (via C-terminus) with SMAD3 (via MH2 domain). Interacts with LHX2 (via LIM domains). Interacts with WT1. Interacts (via C-terminus) with EP300 (via CH1 domain); the interaction is stimulated in response to hypoxia. Interacts with PPARA. Interacts (via C-terminus) with TFAP2A, TFAP2B and TFAP2C.

The protein resides in the nucleus. Its function is as follows. Transcriptional coactivator of the p300/CBP-mediated transcription complex. Acts as a bridge, linking TFAP2 transcription factors and the p300/CBP transcriptional coactivator complex in order to stimulate TFAP2-mediated transcriptional activation. Positively regulates TGF-beta signaling through its association with the SMAD/p300/CBP-mediated transcriptional coactivator complex. Stimulates the peroxisome proliferator-activated receptors PPARA transcriptional activity. Enhances estrogen-dependent transactivation mediated by estrogen receptors. Also acts as a transcriptional corepressor; interferes with the binding of the transcription factors HIF1A or STAT2 and the p300/CBP transcriptional coactivator complex. Participates in sex determination and early gonad development by stimulating transcription activation of SRY. Plays a role in controlling left-right patterning during embryogenesis; potentiates transcriptional activation of NODAL-mediated gene transcription in the left lateral plate mesoderm (LPM). Plays an essential role in differentiation of the adrenal cortex from the adrenogonadal primordium (AGP); stimulates WT1-mediated transcription activation thereby up-regulating the nuclear hormone receptor NR5A1 promoter activity. Associates with chromatin to the PITX2 P1 promoter region. The polypeptide is Cbp/p300-interacting transactivator 2 (CITED2) (Saguinus labiatus (Red-chested mustached tamarin)).